The sequence spans 444 residues: Methylenetetrahydrofolate--tRNA-(uracil-5-)-methyltransferase TrmFO (444 aa).

Residue 9 to 14 coordinates FAD; sequence GAGMAG.

This sequence belongs to the MnmG family. TrmFO subfamily. FAD serves as cofactor.

It localises to the cytoplasm. It carries out the reaction uridine(54) in tRNA + (6R)-5,10-methylene-5,6,7,8-tetrahydrofolate + NADH + H(+) = 5-methyluridine(54) in tRNA + (6S)-5,6,7,8-tetrahydrofolate + NAD(+). It catalyses the reaction uridine(54) in tRNA + (6R)-5,10-methylene-5,6,7,8-tetrahydrofolate + NADPH + H(+) = 5-methyluridine(54) in tRNA + (6S)-5,6,7,8-tetrahydrofolate + NADP(+). Catalyzes the folate-dependent formation of 5-methyl-uridine at position 54 (M-5-U54) in all tRNAs. The protein is Methylenetetrahydrofolate--tRNA-(uracil-5-)-methyltransferase TrmFO of Cereibacter sphaeroides (strain ATCC 17025 / ATH 2.4.3) (Rhodobacter sphaeroides).